The following is a 338-amino-acid chain: DNA-directed RNA polymerase subunit alpha (338 aa).

The tract at residues 1–233 (MYKNWRELIK…EQLQIFINFD (233 aa)) is alpha N-terminal domain (alpha-NTD). Residues 250–338 (INENLYRSVE…KMIQEGKEDL (89 aa)) form an alpha C-terminal domain (alpha-CTD) region.

The protein belongs to the RNA polymerase alpha chain family. As to quaternary structure, homodimer. The RNAP catalytic core consists of 2 alpha, 1 beta, 1 beta' and 1 omega subunit. When a sigma factor is associated with the core the holoenzyme is formed, which can initiate transcription.

It catalyses the reaction RNA(n) + a ribonucleoside 5'-triphosphate = RNA(n+1) + diphosphate. Functionally, DNA-dependent RNA polymerase catalyzes the transcription of DNA into RNA using the four ribonucleoside triphosphates as substrates. The chain is DNA-directed RNA polymerase subunit alpha from Syntrophotalea carbinolica (strain DSM 2380 / NBRC 103641 / GraBd1) (Pelobacter carbinolicus).